Here is a 146-residue protein sequence, read N- to C-terminus: Protein PBDC1 homolog (146 aa).

This sequence belongs to the PBDC1 family.

Its subcellular location is the cytoplasm. The protein is Protein PBDC1 homolog of Saccharomyces cerevisiae (strain ATCC 204508 / S288c) (Baker's yeast).